Here is a 440-residue protein sequence, read N- to C-terminus: 3-phosphoshikimate 1-carboxyvinyltransferase (440 aa).

Lys19, Ser20, and Arg24 together coordinate 3-phosphoshikimate. Lys19 serves as a coordination point for phosphoenolpyruvate. Positions 92 and 121 each coordinate phosphoenolpyruvate. Residues Ser166, Gln168, Asp315, and Lys342 each coordinate 3-phosphoshikimate. Gln168 contacts phosphoenolpyruvate. Asp315 (proton acceptor) is an active-site residue. 2 residues coordinate phosphoenolpyruvate: Arg346 and Arg399.

The protein belongs to the EPSP synthase family. In terms of assembly, monomer.

It is found in the cytoplasm. The catalysed reaction is 3-phosphoshikimate + phosphoenolpyruvate = 5-O-(1-carboxyvinyl)-3-phosphoshikimate + phosphate. It functions in the pathway metabolic intermediate biosynthesis; chorismate biosynthesis; chorismate from D-erythrose 4-phosphate and phosphoenolpyruvate: step 6/7. In terms of biological role, catalyzes the transfer of the enolpyruvyl moiety of phosphoenolpyruvate (PEP) to the 5-hydroxyl of shikimate-3-phosphate (S3P) to produce enolpyruvyl shikimate-3-phosphate and inorganic phosphate. This chain is 3-phosphoshikimate 1-carboxyvinyltransferase, found in Leptospira interrogans serogroup Icterohaemorrhagiae serovar copenhageni (strain Fiocruz L1-130).